A 177-amino-acid chain; its full sequence is Thymidine kinase (177 aa).

11–18 (GPMFSGKS) is an ATP binding site. Catalysis depends on Glu83, which acts as the Proton acceptor. Substrate is bound at residue Phe113. Zn(2+)-binding residues include Cys138 and Cys141. 157–161 (IEIIG) lines the substrate pocket. Cys170 and Cys173 together coordinate Zn(2+).

This sequence belongs to the thymidine kinase family. Homotetramer. Two molecules of substrate bind to each enzyme tetramer.

The enzyme catalyses thymidine + ATP = dTMP + ADP + H(+). Phosphorylates thymidine and thymidine analogs, such as azidothymidine (AZT). Part of the salvage pathway for pyrimidine deoxyribonucleotide synthesis. In Vaccinia virus (strain Tian Tan) (VACV), this protein is Thymidine kinase (OPG101).